Here is a 221-residue protein sequence, read N- to C-terminus: Molybdenum cofactor guanylyltransferase (221 aa).

Residues 18 to 20 (IAG), Lys35, Asn63, Asp81, and Asp112 contribute to the GTP site. A Mg(2+)-binding site is contributed by Asp112.

Belongs to the MobA family. Monomer. The cofactor is Mg(2+).

Its subcellular location is the cytoplasm. The catalysed reaction is Mo-molybdopterin + GTP + H(+) = Mo-molybdopterin guanine dinucleotide + diphosphate. Functionally, transfers a GMP moiety from GTP to Mo-molybdopterin (Mo-MPT) cofactor (Moco or molybdenum cofactor) to form Mo-molybdopterin guanine dinucleotide (Mo-MGD) cofactor. This is Molybdenum cofactor guanylyltransferase from Brucella melitensis biotype 2 (strain ATCC 23457).